The primary structure comprises 407 residues: Imidazolonepropionase (407 aa).

His-68 and His-70 together coordinate Fe(3+). 2 residues coordinate Zn(2+): His-68 and His-70. Arg-77, Tyr-140, and His-173 together coordinate 4-imidazolone-5-propanoate. Residue Tyr-140 coordinates N-formimidoyl-L-glutamate. Residue His-238 participates in Fe(3+) binding. His-238 is a Zn(2+) binding site. Gln-241 contributes to the 4-imidazolone-5-propanoate binding site. Asp-313 provides a ligand contact to Fe(3+). Asp-313 contacts Zn(2+). Asn-315 and Gly-317 together coordinate N-formimidoyl-L-glutamate. Thr-318 provides a ligand contact to 4-imidazolone-5-propanoate.

Belongs to the metallo-dependent hydrolases superfamily. HutI family. Zn(2+) is required as a cofactor. Fe(3+) serves as cofactor.

The protein localises to the cytoplasm. It catalyses the reaction 4-imidazolone-5-propanoate + H2O = N-formimidoyl-L-glutamate. It participates in amino-acid degradation; L-histidine degradation into L-glutamate; N-formimidoyl-L-glutamate from L-histidine: step 3/3. Catalyzes the hydrolytic cleavage of the carbon-nitrogen bond in imidazolone-5-propanoate to yield N-formimidoyl-L-glutamate. It is the third step in the universal histidine degradation pathway. This chain is Imidazolonepropionase, found in Burkholderia lata (strain ATCC 17760 / DSM 23089 / LMG 22485 / NCIMB 9086 / R18194 / 383).